We begin with the raw amino-acid sequence, 241 residues long: Interleukin-6 (241 aa).

The interval 1–25 (MNFTEGCEATGRRPGSAGSRRRRAP) is disordered. The signal sequence occupies residues 1–46 (MNFTEGCEATGRRPGSAGSRRRRAPRPGPVALLPLLLPLLLPPAAA). Cysteines 122 and 132 form a disulfide.

This sequence belongs to the IL-6 superfamily. Component of a hexamer of two molecules each of IL6, IL6R and IL6ST; first binds to IL6R to associate with the signaling subunit IL6ST.

The protein resides in the secreted. Functionally, cytokine with a wide variety of biological functions in immunity, tissue regeneration, and metabolism. Binds to IL6R, then the complex associates to the signaling subunit IL6ST/gp130 to trigger the intracellular IL6-signaling pathway. The interaction with the membrane-bound IL6R and IL6ST stimulates 'classic signaling', whereas the binding of IL6 and soluble IL6R to IL6ST stimulates 'trans-signaling'. Alternatively, 'cluster signaling' occurs when membrane-bound IL6:IL6R complexes on transmitter cells activate IL6ST receptors on neighboring receiver cells. This chain is Interleukin-6 (IL6), found in Gallus gallus (Chicken).